Here is a 420-residue protein sequence, read N- to C-terminus: Torsin-4A (420 aa).

A helical membrane pass occupies residues 130 to 150; that stretch reads CLLLFIAIVCFQIFNAIENLD. Residue 202-209 participates in ATP binding; that stretch reads GPSGVGKS.

The protein belongs to the ClpA/ClpB family. Torsin subfamily.

Its subcellular location is the membrane. This Xenopus tropicalis (Western clawed frog) protein is Torsin-4A (tor4a).